Consider the following 199-residue polypeptide: Protein GrpE (199 aa).

Positions 1 to 40 (MEKKKHGTNSISEALKVKAAVEQETATPEPTPQSETESAD) are disordered. Residues 24-36 (ETATPEPTPQSET) are compositionally biased toward polar residues.

This sequence belongs to the GrpE family. As to quaternary structure, homodimer.

It localises to the cytoplasm. Its function is as follows. Participates actively in the response to hyperosmotic and heat shock by preventing the aggregation of stress-denatured proteins, in association with DnaK and GrpE. It is the nucleotide exchange factor for DnaK and may function as a thermosensor. Unfolded proteins bind initially to DnaJ; upon interaction with the DnaJ-bound protein, DnaK hydrolyzes its bound ATP, resulting in the formation of a stable complex. GrpE releases ADP from DnaK; ATP binding to DnaK triggers the release of the substrate protein, thus completing the reaction cycle. Several rounds of ATP-dependent interactions between DnaJ, DnaK and GrpE are required for fully efficient folding. The sequence is that of Protein GrpE from Geotalea uraniireducens (strain Rf4) (Geobacter uraniireducens).